The following is a 281-amino-acid chain: Bifunctional protein FolD (281 aa).

NADP(+) contacts are provided by residues 165–167 (GRG), Thr192, and Val233.

It belongs to the tetrahydrofolate dehydrogenase/cyclohydrolase family. Homodimer.

The catalysed reaction is (6R)-5,10-methylene-5,6,7,8-tetrahydrofolate + NADP(+) = (6R)-5,10-methenyltetrahydrofolate + NADPH. It carries out the reaction (6R)-5,10-methenyltetrahydrofolate + H2O = (6R)-10-formyltetrahydrofolate + H(+). It participates in one-carbon metabolism; tetrahydrofolate interconversion. Functionally, catalyzes the oxidation of 5,10-methylenetetrahydrofolate to 5,10-methenyltetrahydrofolate and then the hydrolysis of 5,10-methenyltetrahydrofolate to 10-formyltetrahydrofolate. The protein is Bifunctional protein FolD of Mycobacterium tuberculosis (strain ATCC 25177 / H37Ra).